Reading from the N-terminus, the 69-residue chain is Cytoinsectotoxin-2a (69 aa).

It belongs to the cationic peptide 06 (cytoinsectotoxin) family. In terms of tissue distribution, expressed by the venom gland.

Its subcellular location is the secreted. Functionally, insecticidal and antimicrobial peptide. Has insecticidal activity against larvae of flesh fly S.carnaria. Has antibacterial activity against Gram-positive bacterium B.subtilis B-501 (MIC=1.25 uM) and Gram-negative bacterium E.coli DH5alpha (MIC=2.5 uM). The chain is Cytoinsectotoxin-2a from Lachesana tarabaevi (Spider).